Reading from the N-terminus, the 76-residue chain is Small ribosomal subunit protein bS18 (76 aa).

The protein belongs to the bacterial ribosomal protein bS18 family. Part of the 30S ribosomal subunit. Forms a tight heterodimer with protein bS6.

Functionally, binds as a heterodimer with protein bS6 to the central domain of the 16S rRNA, where it helps stabilize the platform of the 30S subunit. The protein is Small ribosomal subunit protein bS18 of Xylella fastidiosa (strain M23).